A 234-amino-acid chain; its full sequence is C2H2-type zinc-finger transcription factor clz7 (234 aa).

2 disordered regions span residues 45–99 (RPEG…SRVD) and 118–154 (SAQP…NGTA). 2 stretches are compositionally biased toward low complexity: residues 66 to 77 (SQSSNTSPTSES) and 140 to 154 (SSGT…NGTA). The C2H2-type 1; degenerate zinc-finger motif lies at 159–184 (NRCWDHGCNGKKFLNHSNLVRHRREN). The C2H2-type 2; degenerate zinc-finger motif lies at 191-223 (FICPMCGAYFSRSTARNQHLEKKSCNRVRRYSN).

It belongs to the GLI C2H2-type zinc-finger protein family.

It is found in the nucleus. In terms of biological role, transcription factor that probably regulates the expression of the gene cluster that mediates the biosynthesis of squalestatin S1 (SQS1, also known as zaragozic acid A), a heavily oxidized fungal polyketide that offers potent cholesterol lowering activity by targeting squalene synthase (SS). The polypeptide is C2H2-type zinc-finger transcription factor clz7 (Cochliobolus lunatus (Filamentous fungus)).